The chain runs to 239 residues: Terpene cyclase idtB (239 aa).

5 helical membrane passes run 20–40 (MADT…ALMI), 50–70 (CMAL…TIVY), 75–95 (RVEL…MVGA), 113–133 (AGFI…ALAM), and 138–158 (GLAY…GGLF). N-linked (GlcNAc...) asparagine glycosylation is present at asparagine 164. The chain crosses the membrane as a helical span at residues 197–217 (EVFGWLASPLVLWSLVTFLLA).

Belongs to the paxB family.

It localises to the membrane. It participates in secondary metabolite biosynthesis. Terpene cyclase; part of the gene cluster that mediates the biosynthesis of paspalitrems, indole-diterpene (IDT) mycotoxins that are potent tremorgens in mammals. The geranylgeranyl diphosphate (GGPP) synthase idtG is proposed to catalyze the first step in IDT biosynthesis via catalysis of a series of iterative condensations of isopentenyl diphosphate (IPP) with dimethylallyl diphosphate (DMAPP), geranyl diphosphate (GPP), and farnesyl diphosphate (FPP), to form GGPP. Condensation of indole-3-glycerol phosphate with GGPP by the prenyltransferase idtC then forms 3-geranylgeranylindole (3-GGI). Epoxidation of the two terminal alkenes of the geranylgeranyl moiety by the FAD-dependent monooxygenase idtM, and cyclization by the terpene cyclase idtB then leads to the production of paspaline. The cytochrome P450 monooxygenase idtP then catalyzes oxidative elimination of the pendant methyl group at C-12 of paspaline and generates the C-10 ketone to yield 13-desoxypaxilline. The cytochrome P450 monooxygenase idtQ may catalyze the C-13 oxidation of 13-desoxypaxilline to afford paxilline. Considering that both paspalicine and paxilline were detected in C.paspali, idtQ also catalyzes the formation of paspalinine from 13-desoxypaxilline via paspalicine as an intermediate. Finally, the alpha-prenyltransferase idtF prenylates paspalinine at the C-20 or the C-21 positions to yield paspalitrems A and C, respectively. The hydroxylation of paspalitrem A at C-32 by a still unknown oxidase affords paspalitrem B. This chain is Terpene cyclase idtB, found in Claviceps paspali (Rye ergot fungus).